The sequence spans 660 residues: Bifunctional polymyxin resistance protein ArnA (660 aa).

Residues 1-304 (MKTVVFAYHD…MLGLVQGSRL (304 aa)) are formyltransferase ArnAFT. Residue 86 to 88 (HLI) participates in (6R)-10-formyltetrahydrofolate binding. Residue H104 is the Proton donor; for formyltransferase activity of the active site. (6R)-10-formyltetrahydrofolate is bound by residues R114 and 136 to 140 (VKRAD). The interval 314-660 (RRTRVLILGV…RTVDLTDKPS (347 aa)) is dehydrogenase ArnADH. NAD(+) contacts are provided by residues D347 and 368 to 369 (DI). Residues A393, Y398, and 432 to 433 (TS) contribute to the UDP-alpha-D-glucuronate site. Residue E434 is the Proton acceptor; for decarboxylase activity of the active site. Residues R460, N492, 526-535 (KLIDGGKQKR), and Y613 each bind UDP-alpha-D-glucuronate. The active-site Proton donor; for decarboxylase activity is the R619.

This sequence in the N-terminal section; belongs to the Fmt family. UDP-L-Ara4N formyltransferase subfamily. The protein in the C-terminal section; belongs to the NAD(P)-dependent epimerase/dehydratase family. UDP-glucuronic acid decarboxylase subfamily. Homohexamer, formed by a dimer of trimers.

It carries out the reaction UDP-alpha-D-glucuronate + NAD(+) = UDP-beta-L-threo-pentopyranos-4-ulose + CO2 + NADH. It catalyses the reaction UDP-4-amino-4-deoxy-beta-L-arabinose + (6R)-10-formyltetrahydrofolate = UDP-4-deoxy-4-formamido-beta-L-arabinose + (6S)-5,6,7,8-tetrahydrofolate + H(+). It participates in nucleotide-sugar biosynthesis; UDP-4-deoxy-4-formamido-beta-L-arabinose biosynthesis; UDP-4-deoxy-4-formamido-beta-L-arabinose from UDP-alpha-D-glucuronate: step 1/3. Its pathway is nucleotide-sugar biosynthesis; UDP-4-deoxy-4-formamido-beta-L-arabinose biosynthesis; UDP-4-deoxy-4-formamido-beta-L-arabinose from UDP-alpha-D-glucuronate: step 3/3. It functions in the pathway bacterial outer membrane biogenesis; lipopolysaccharide biosynthesis. Its function is as follows. Bifunctional enzyme that catalyzes the oxidative decarboxylation of UDP-glucuronic acid (UDP-GlcUA) to UDP-4-keto-arabinose (UDP-Ara4O) and the addition of a formyl group to UDP-4-amino-4-deoxy-L-arabinose (UDP-L-Ara4N) to form UDP-L-4-formamido-arabinose (UDP-L-Ara4FN). The modified arabinose is attached to lipid A and is required for resistance to polymyxin and cationic antimicrobial peptides. The protein is Bifunctional polymyxin resistance protein ArnA of Shigella flexneri.